The primary structure comprises 680 residues: Probable oxidoreductase YoaE (680 aa).

A 4Fe-4S Mo/W bis-MGD-type domain is found at Asn-9 to Lys-66. Residues Cys-16, Cys-20, Cys-24, and Cys-52 each coordinate [4Fe-4S] cluster.

This sequence belongs to the prokaryotic molybdopterin-containing oxidoreductase family. Mo-bis(molybdopterin guanine dinucleotide) serves as cofactor.

This chain is Probable oxidoreductase YoaE (yoaE), found in Bacillus subtilis (strain 168).